The primary structure comprises 127 residues: Large ribosomal subunit protein bL19 (127 aa).

It belongs to the bacterial ribosomal protein bL19 family.

Functionally, this protein is located at the 30S-50S ribosomal subunit interface and may play a role in the structure and function of the aminoacyl-tRNA binding site. In Trichodesmium erythraeum (strain IMS101), this protein is Large ribosomal subunit protein bL19.